The primary structure comprises 238 residues: tRNA (guanine-N(7)-)-methyltransferase (238 aa).

Polar residues predominate over residues 1–12 (MTDTAENQTPND). The disordered stretch occupies residues 1–20 (MTDTAENQTPNDRQAGHPRS). The S-adenosyl-L-methionine site is built by glutamate 70, aspartate 95, aspartate 122, and aspartate 145. Aspartate 145 is an active-site residue. Substrate contacts are provided by residues lysine 149, aspartate 181, and 216-219 (TKFE).

Belongs to the class I-like SAM-binding methyltransferase superfamily. TrmB family.

The catalysed reaction is guanosine(46) in tRNA + S-adenosyl-L-methionine = N(7)-methylguanosine(46) in tRNA + S-adenosyl-L-homocysteine. The protein operates within tRNA modification; N(7)-methylguanine-tRNA biosynthesis. Functionally, catalyzes the formation of N(7)-methylguanine at position 46 (m7G46) in tRNA. The polypeptide is tRNA (guanine-N(7)-)-methyltransferase (Neisseria gonorrhoeae (strain NCCP11945)).